Here is a 464-residue protein sequence, read N- to C-terminus: Argininosuccinate lyase (464 aa).

The protein belongs to the lyase 1 family. Argininosuccinate lyase subfamily.

The protein localises to the cytoplasm. The enzyme catalyses 2-(N(omega)-L-arginino)succinate = fumarate + L-arginine. It participates in amino-acid biosynthesis; L-arginine biosynthesis; L-arginine from L-ornithine and carbamoyl phosphate: step 3/3. This is Argininosuccinate lyase from Pseudomonas syringae pv. tomato (strain ATCC BAA-871 / DC3000).